A 503-amino-acid polypeptide reads, in one-letter code: Nuclear respiratory factor 1 (503 aa).

A dimerization region spans residues 1–78 (MEEHGVTQTE…AHLAAAGPVG (78 aa)). The interval 36–57 (SMLSADEDSPSSPEDTSYDDSD) is disordered. Phosphoserine; by CK2 is present on residues Ser-39, Ser-44, Ser-46, Ser-47, and Ser-52. Residues 88–116 (GKKRKRPHVFESNPSIRKRQQTRLLRKLR) carry the Nuclear localization signal motif. The DNA-binding element occupies 109 to 305 (TRLLRKLRAT…SIAHLVPSQT (197 aa)). Lys-139 participates in a covalent cross-link: Glycyl lysine isopeptide (Lys-Gly) (interchain with G-Cter in SUMO2). The required for transcriptional activation stretch occupies residues 301-476 (VPSQTVVQTF…AQGNGPVQVA (176 aa)).

Belongs to the NRF1/Ewg family. As to quaternary structure, homodimer. Binds DNA as a dimer. Interacts with PPRC1. Phosphorylation enhances DNA binding. Widely expressed in embryonic, fetal, and adult tissues.

It is found in the nucleus. Transcription factor that activates the expression of the EIF2S1 (EIF2-alpha) gene. Links the transcriptional modulation of key metabolic genes to cellular growth and development. Implicated in the control of nuclear genes required for respiration, heme biosynthesis, and mitochondrial DNA transcription and replication. The chain is Nuclear respiratory factor 1 (Nrf1) from Mus musculus (Mouse).